Consider the following 598-residue polypeptide: Urease subunit alpha (598 aa).

Residues 136-598 (GGLDTHVHWL…APLAQRYFLF (463 aa)) enclose the Urease domain. Ni(2+) is bound by residues His141, His143, and Lys223. Lys223 is modified (N6-carboxylysine). His225 lines the substrate pocket. Ni(2+) contacts are provided by His252 and His278. The active-site Proton donor is the His326. Asp366 serves as a coordination point for Ni(2+).

It belongs to the metallo-dependent hydrolases superfamily. Urease alpha subunit family. Heterotrimer of UreA (gamma), UreB (beta) and UreC (alpha) subunits. Three heterotrimers associate to form the active enzyme. It depends on Ni cation as a cofactor. Post-translationally, carboxylation allows a single lysine to coordinate two nickel ions.

It is found in the cytoplasm. It carries out the reaction urea + 2 H2O + H(+) = hydrogencarbonate + 2 NH4(+). The protein operates within nitrogen metabolism; urea degradation; CO(2) and NH(3) from urea (urease route): step 1/1. This chain is Urease subunit alpha, found in Ureaplasma urealyticum serovar 10 (strain ATCC 33699 / Western).